The sequence spans 556 residues: Inositol 1,4,5-trisphosphate receptor-interacting protein (556 aa).

An N-terminal signal peptide occupies residues 1–15 (MALGLFRVCLVVVTA). Over 16 to 88 (IINHPLLFPR…EGQQQNESRT (73 aa)) the chain is Extracellular. N-linked (GlcNAc...) asparagine glycosylation is found at asparagine 27 and asparagine 84. Residues 32 to 87 (ENEEEIIRQMQAHQEKLQLEQLRLEEEMARLAADKEAEKEALERVAEEGQQQNESR) adopt a coiled-coil conformation. The chain crosses the membrane as a helical span at residues 89–107 (AWDLWSTLCMILFLVIEVW). Over 108 to 556 (RQDHQDAPSP…ASLPPKTVIL (449 aa)) the chain is Cytoplasmic.

This sequence belongs to the ITPRIP family. In terms of assembly, interacts with ITPR.

Its subcellular location is the cell membrane. The protein localises to the nucleus outer membrane. Functionally, enhances Ca(2+)-mediated inhibition of inositol 1,4,5-triphosphate receptor (ITPR) Ca(2+) release. This is Inositol 1,4,5-trisphosphate receptor-interacting protein (ITPRIP) from Bos taurus (Bovine).